A 73-amino-acid chain; its full sequence is Long neurotoxin 3 (73 aa).

5 cysteine pairs are disulfide-bonded: Cys3-Cys21, Cys14-Cys42, Cys27-Cys31, Cys46-Cys57, and Cys58-Cys63.

This sequence belongs to the three-finger toxin family. Long-chain subfamily. Type II alpha-neurotoxin sub-subfamily. Expressed by the venom gland.

The protein resides in the secreted. In terms of biological role, binds with high affinity to muscular (alpha-1/CHRNA1) and neuronal (alpha-7/CHRNA7) nicotinic acetylcholine receptor (nAChR) and inhibits acetylcholine from binding to the receptor, thereby impairing neuromuscular and neuronal transmission. The sequence is that of Long neurotoxin 3 from Ophiophagus hannah (King cobra).